A 183-amino-acid chain; its full sequence is MLSALLVMAAIAVVLGAALGFAAIRFRVEGDPLVDKIDAILPQTQCGQCGYPGCKPYAQAIAQGEADINQCPPGGEEGVRKLADLLGREFKPLSAEHGEEKPKAVAYIDENVCIGCTLCLQACPVDAIVGAAKQMHTVVDPLCTGCELCVAPCPVDCIYMEPVRETVQTWRWKYPVVEIRKAA.

The hydrophobic stretch occupies residues 1–23 (MLSALLVMAAIAVVLGAALGFAA). Residues 29–88 (EGDPLVDKIDAILPQTQCGQCGYPGCKPYAQAIAQGEADINQCPPGGEEGVRKLADLLGR) enclose the 4Fe-4S domain. [4Fe-4S] cluster-binding residues include Cys-46, Cys-49, Cys-54, Cys-71, Cys-113, Cys-116, Cys-119, Cys-123, Cys-143, Cys-146, Cys-149, and Cys-153. 4Fe-4S ferredoxin-type domains lie at 104–133 (AVAY…GAAK) and 135–163 (MHTV…MEPV).

Belongs to the 4Fe4S bacterial-type ferredoxin family. RnfB subfamily. As to quaternary structure, the complex is composed of six subunits: RnfA, RnfB, RnfC, RnfD, RnfE and RnfG. Requires [4Fe-4S] cluster as cofactor.

It localises to the cell inner membrane. Part of a membrane-bound complex that couples electron transfer with translocation of ions across the membrane. The chain is Ion-translocating oxidoreductase complex subunit B from Azoarcus sp. (strain BH72).